A 262-amino-acid chain; its full sequence is Cytochrome b mRNA maturase bI2 (262 aa).

It belongs to the LAGLIDADG endonuclease family.

It is found in the mitochondrion. This protein is responsible for splicing and maturation of cytochrome b mRNA. Specifically, it may be responsible for the splicing specificity of the second intron. The polypeptide is Cytochrome b mRNA maturase bI2 (bI2) (Debaryomyces hansenii (strain ATCC 36239 / CBS 767 / BCRC 21394 / JCM 1990 / NBRC 0083 / IGC 2968) (Yeast)).